A 265-amino-acid polypeptide reads, in one-letter code: MCMVIFAPLFAIFAFATCGGYSGGLRLSVDCVNKTESNLSIDIAFAYPFRLHQVTFEVPTCEGKERQKLALVGDSSSSAEFFVTVAVFAFLYSLAATVVYIFFQNKYRENNRGPLIDFIVTVVFSFLWLVGSSAWAKGLSDVKVATDPKEVLLLMSACKQPSNKCMAVHSPVMSSLNTSVVFGFLNFILWAGNIWFVFKETGWHSSGQRYLSDPMEKHSSSYNQGGYNQDSYGSSGGYSQQASLGPTSDEFGQQPSGPTSFNNQI.

Residues 1–4 lie on the Cytoplasmic side of the membrane; it reads MCMV. The region spanning 1 to 202 is the MARVEL domain; sequence MCMVIFAPLF…NIWFVFKETG (202 aa). The chain crosses the membrane as a helical span at residues 5–25; the sequence is IFAPLFAIFAFATCGGYSGGL. The Vesicular portion of the chain corresponds to 26-81; that stretch reads RLSVDCVNKTESNLSIDIAFAYPFRLHQVTFEVPTCEGKERQKLALVGDSSSSAEF. 2 N-linked (GlcNAc...) asparagine glycosylation sites follow: Asn33 and Asn38. The chain crosses the membrane as a helical span at residues 82–102; that stretch reads FVTVAVFAFLYSLAATVVYIF. Residues 103-114 are Cytoplasmic-facing; sequence FQNKYRENNRGP. Residues 115–135 traverse the membrane as a helical segment; that stretch reads LIDFIVTVVFSFLWLVGSSAW. The Vesicular segment spans residues 136–177; it reads AKGLSDVKVATDPKEVLLLMSACKQPSNKCMAVHSPVMSSLN. The N-linked (GlcNAc...) asparagine glycan is linked to Asn177. The chain crosses the membrane as a helical span at residues 178 to 198; it reads TSVVFGFLNFILWAGNIWFVF. Topologically, residues 199-265 are cytoplasmic; that stretch reads KETGWHSSGQ…SGPTSFNNQI (67 aa). Repeat 1 spans residues 210-214; it reads YLSDP. The segment at 210–242 is 5 X approximate repeats; the sequence is YLSDPMEKHSSSYNQGGYNQDSYGSSGGYSQQA. Ser212 and Ser220 each carry phosphoserine. The tract at residues 221–265 is disordered; sequence SYNQGGYNQDSYGSSGGYSQQASLGPTSDEFGQQPSGPTSFNNQI. Repeat copies occupy residues 222–226, 227–231, 232–236, and 238–242. A compositionally biased stretch (low complexity) spans 224–243; the sequence is QGGYNQDSYGSSGGYSQQAS. Over residues 244-265 the composition is skewed to polar residues; sequence LGPTSDEFGQQPSGPTSFNNQI.

Belongs to the synaptophysin/synaptobrevin family. As to expression, central nervous system.

The protein localises to the cytoplasmic vesicle. The protein resides in the secretory vesicle. It localises to the synaptic vesicle membrane. It is found in the synapse. Its subcellular location is the synaptosome. Its function is as follows. Intrinsic membrane protein of small synaptic vesicles. Probable vesicular channel protein. The polypeptide is Synaptoporin (Synpr) (Rattus norvegicus (Rat)).